The sequence spans 297 residues: Phosphoribosylaminoimidazole-succinocarboxamide synthase (297 aa).

The protein belongs to the SAICAR synthetase family.

It carries out the reaction 5-amino-1-(5-phospho-D-ribosyl)imidazole-4-carboxylate + L-aspartate + ATP = (2S)-2-[5-amino-1-(5-phospho-beta-D-ribosyl)imidazole-4-carboxamido]succinate + ADP + phosphate + 2 H(+). It participates in purine metabolism; IMP biosynthesis via de novo pathway; 5-amino-1-(5-phospho-D-ribosyl)imidazole-4-carboxamide from 5-amino-1-(5-phospho-D-ribosyl)imidazole-4-carboxylate: step 1/2. This chain is Phosphoribosylaminoimidazole-succinocarboxamide synthase, found in Rhodococcus erythropolis (strain PR4 / NBRC 100887).